Reading from the N-terminus, the 361-residue chain is Alanine racemase 2 (361 aa).

Lys30 serves as the catalytic Proton acceptor; specific for D-alanine. Lys30 is modified (N6-(pyridoxal phosphate)lysine). Arg122 is a binding site for substrate. The Proton acceptor; specific for L-alanine role is filled by Tyr256. Substrate is bound at residue Met303.

The protein belongs to the alanine racemase family. Pyridoxal 5'-phosphate is required as a cofactor.

The catalysed reaction is L-alanine = D-alanine. It functions in the pathway amino-acid biosynthesis; D-alanine biosynthesis; D-alanine from L-alanine: step 1/1. In terms of biological role, catalyzes the interconversion of L-alanine and D-alanine. May also act on other amino acids. This Staphylococcus aureus (strain Mu50 / ATCC 700699) protein is Alanine racemase 2 (alr2).